A 193-amino-acid polypeptide reads, in one-letter code: Histone H5 (193 aa).

Over residues 1–11 (TDSPIPAPAPA) the composition is skewed to pro residues. 2 disordered regions span residues 1–29 (TDSPIPAPAPAAKPKRARAPRKPASHPTY) and 80–193 (GVLK…PKKK). Basic residues predominate over residues 13-24 (KPKRARAPRKPA). One can recognise an H15 domain in the interval 25 to 98 (SHPTYSEMIA…GASGSFRLAK (74 aa)). A compositionally biased stretch (basic residues) spans 104–193 (RSPAGRKKKK…SGARKSPKKK (90 aa)).

The protein belongs to the histone H1/H5 family. In terms of tissue distribution, erythroid cells.

The protein localises to the nucleus. The protein resides in the chromosome. Histone H5 performs the same function as H1, being necessary for the condensation of nucleosome chains into higher order structures, and replaces histone H1 in certain cells. The chain is Histone H5 from Anser anser anser (Western greylag goose).